Here is a 168-residue protein sequence, read N- to C-terminus: Peptidoglycan-associated lipoprotein (168 aa).

The first 24 residues, 1-24, serve as a signal peptide directing secretion; sequence MRRIQSIARSPIAIALFMSLAVAG. The N-palmitoyl cysteine moiety is linked to residue cysteine 25. Cysteine 25 carries the S-diacylglycerol cysteine lipid modification. Positions 51–167 constitute an OmpA-like domain; sequence QDFTVNVGDR…RAVTVLNGAG (117 aa).

This sequence belongs to the Pal lipoprotein family. In terms of assembly, the Tol-Pal system is composed of five core proteins: the inner membrane proteins TolA, TolQ and TolR, the periplasmic protein TolB and the outer membrane protein Pal. They form a network linking the inner and outer membranes and the peptidoglycan layer. Post-translationally, the N-terminus is blocked.

The protein resides in the cell outer membrane. Functionally, part of the Tol-Pal system, which plays a role in outer membrane invagination during cell division and is important for maintaining outer membrane integrity. This chain is Peptidoglycan-associated lipoprotein, found in Brucella abortus biovar 1 (strain 9-941).